The sequence spans 690 residues: Glycine--tRNA ligase beta subunit (690 aa).

Belongs to the class-II aminoacyl-tRNA synthetase family. Tetramer of two alpha and two beta subunits.

The protein localises to the cytoplasm. It carries out the reaction tRNA(Gly) + glycine + ATP = glycyl-tRNA(Gly) + AMP + diphosphate. This chain is Glycine--tRNA ligase beta subunit, found in Pediococcus pentosaceus (strain ATCC 25745 / CCUG 21536 / LMG 10740 / 183-1w).